Here is a 908-residue protein sequence, read N- to C-terminus: 26S proteasome non-ATPase regulatory subunit 2 (908 aa).

Met-1 carries the post-translational modification N-acetylmethionine. Residues 1–51 (MEEGGRDKTPVQSQQPSATTPSGADEKSSGKERRDAGEKDKEQELSEEDKQ) form a disordered region. Residues Thr-9 and Thr-20 each carry the phosphothreonine modification. Over residues 10–22 (PVQSQQPSATTPS) the composition is skewed to polar residues. Residues 24-51 (ADEKSSGKERRDAGEKDKEQELSEEDKQ) show a composition bias toward basic and acidic residues. Phosphoserine occurs at positions 29 and 147. Position 194 is a phosphotyrosine (Tyr-194). Phosphoserine occurs at positions 361 and 363. PC repeat units lie at residues 409–442 (SAAA…YIKS), 443–479 (GALL…TMRL), 480–514 (GSIF…SMEV), 517–551 (VTAL…TELK), and 560–589 (LGLG…PFRS). Residue Lys-551 is modified to N6-acetyllysine. Basic and acidic residues predominate over residues 623–643 (KEKEEDKDKKEKKDKDKKEAP). Residues 623–645 (KEKEEDKDKKEKKDKDKKEAPAD) form a disordered region. 2 PC repeats span residues 692 to 723 (LALA…EVSY) and 742 to 757 (AAML…KDPN). The required for interaction with UBLCP1 stretch occupies residues 708 to 903 (DTLSKFSHDA…LEGFVILRKN (196 aa)).

Belongs to the proteasome subunit S2 family. Component of the 19S proteasome regulatory particle complex. The 26S proteasome consists of a 20S core particle (CP) and two 19S regulatory subunits (RP). The regulatory particle is made of a lid composed of 9 subunits, a base containing 6 ATPases and few additional components including PSMD2. Interacts with RPGRIP1L. Interacts with CRY1 in a KDM8-dependent manner. Interacts (via C-terminus) with phosphatase UBLCP1 (via ubiquitin-like domain); the interaction recruits UBLCP1 to the 19S regulatory particle where it dephosphorylates 19S subunit PSMC2/RPT1 which impairs PSMC2 ATPase activity and disrupts 26S proteasome assembly.

Its function is as follows. Component of the 26S proteasome, a multiprotein complex involved in the ATP-dependent degradation of ubiquitinated proteins. This complex plays a key role in the maintenance of protein homeostasis by removing misfolded or damaged proteins, which could impair cellular functions, and by removing proteins whose functions are no longer required. Therefore, the proteasome participates in numerous cellular processes, including cell cycle progression, apoptosis, or DNA damage repair. Functionally, binds to the intracellular domain of tumor necrosis factor type 1 receptor. The binding domain of TRAP1 and TRAP2 resides outside the death domain of TNFR1. In Mus musculus (Mouse), this protein is 26S proteasome non-ATPase regulatory subunit 2 (Psmd2).